The primary structure comprises 762 residues: LON peptidase N-terminal domain and RING finger protein 1 (762 aa).

Positions 1-35 (MSSPAVARASPGGNREASGGPRSRNGPWEVGGGGE) are disordered. A TPR 1 repeat occupies 47–80 (WELLLRRGELLALGGHLKGALEAFAAALRRGAPA). The RING-type 1 zinc finger occupies 118–154 (CLSCRGFLSEPVTVPCGHSYCRRCLRRELRARCRLCR). TPR repeat units lie at residues 201-233 (ARAA…EPSD), 235-267 (TLKI…LPNW), and 268-301 (PEVY…DEDF). Phosphoserine is present on Ser420. The segment at 468-506 (CSLCMRLFFEPVTTPCGHSFCKNCLERCLDHAPYCPLCK) adopts an RING-type 2 zinc-finger fold. The Lon N-terminal domain maps to 547–757 (TAELSHLTKN…KIQHILTYFS (211 aa)).

This chain is LON peptidase N-terminal domain and RING finger protein 1 (Lonrf1), found in Mus musculus (Mouse).